A 480-amino-acid chain; its full sequence is Mannose-1-phosphate guanylyltransferase ManC (480 aa).

This sequence belongs to the mannose-6-phosphate isomerase type 2 family.

The enzyme catalyses alpha-D-mannose 1-phosphate + GTP + H(+) = GDP-alpha-D-mannose + diphosphate. The protein operates within nucleotide-sugar biosynthesis; GDP-alpha-D-mannose biosynthesis; GDP-alpha-D-mannose from alpha-D-mannose 1-phosphate (GTP route): step 1/1. In terms of biological role, involved in the biosynthesis of the capsular polysaccharide colanic acid. The sequence is that of Mannose-1-phosphate guanylyltransferase ManC (manC) from Salmonella typhimurium (strain LT2 / SGSC1412 / ATCC 700720).